Here is a 1246-residue protein sequence, read N- to C-terminus: DNA-directed RNA polymerase subunit beta (1246 aa).

Positions 1171–1246 (IDDDAGEMSL…EFDGYNDFKA (76 aa)) are disordered. 2 stretches are compositionally biased toward acidic residues: residues 1202-1223 (DEEEKDEDNDSEEALITEEDFE) and 1230-1240 (EYAEDDDEFDG).

Belongs to the RNA polymerase beta chain family. As to quaternary structure, the RNAP catalytic core consists of 2 alpha, 1 beta, 1 beta' and 1 omega subunit. When a sigma factor is associated with the core the holoenzyme is formed, which can initiate transcription.

It carries out the reaction RNA(n) + a ribonucleoside 5'-triphosphate = RNA(n+1) + diphosphate. Functionally, DNA-dependent RNA polymerase catalyzes the transcription of DNA into RNA using the four ribonucleoside triphosphates as substrates. In Alkaliphilus metalliredigens (strain QYMF), this protein is DNA-directed RNA polymerase subunit beta.